Consider the following 247-residue polypeptide: Trypsin-4 (247 aa).

The N-terminal stretch at Met-1–Ala-15 is a signal peptide. The propeptide at Leu-16 to Lys-23 is activation peptide. The Peptidase S1 domain occupies Ile-24 to Ala-245. Cystine bridges form between Cys-30–Cys-161, Cys-49–Cys-65, Cys-133–Cys-234, Cys-140–Cys-207, Cys-172–Cys-186, and Cys-197–Cys-221. His-64 (charge relay system) is an active-site residue. The Ca(2+) site is built by Glu-76, Asn-78, Val-81, and Glu-86. Asp-108 functions as the Charge relay system in the catalytic mechanism. The active-site Charge relay system is the Ser-201.

Belongs to the peptidase S1 family. Ca(2+) serves as cofactor. Proteolytically cleaved and activated by an autocatalytic mechanism. Cleavage by CTRC inhibits autoactivation.

The protein localises to the secreted. Its subcellular location is the extracellular space. It catalyses the reaction Preferential cleavage: Arg-|-Xaa, Lys-|-Xaa.. With respect to regulation, activated by autocatalytic cleavage. Cleavage by CTRC inhibits autoactivation. In terms of biological role, serine protease capable of autoactivation. The protein is Trypsin-4 of Rattus norvegicus (Rat).